A 165-amino-acid polypeptide reads, in one-letter code: Protein SprT (165 aa).

The SprT-like domain occupies 22–163; sequence LAQANLKLDR…RCVHCGEPLV (142 aa). Histidine 78 contacts Zn(2+). Residue glutamate 79 is part of the active site. Position 82 (histidine 82) interacts with Zn(2+).

The protein belongs to the SprT family. Zn(2+) serves as cofactor.

Its subcellular location is the cytoplasm. The protein is Protein SprT of Salmonella paratyphi A (strain ATCC 9150 / SARB42).